The sequence spans 476 residues: Zinc metalloproteinase/disintegrin (476 aa).

A signal peptide spans 1–20 (MIQVLLVIICLADFPYQGTS). A propeptide spanning residues 21-184 (IILESGNVND…KSDEPIKASQ (164 aa)) is cleaved from the precursor. Gln185 carries the pyrrolidone carboxylic acid modification. In terms of domain architecture, Peptidase M12B spans 191–387 (RYIELVVVAD…RNPQCILNEP (197 aa)). Residues Glu194 and Asp278 each coordinate Ca(2+). 3 disulfides stabilise this stretch: Cys302–Cys382, Cys342–Cys366, and Cys344–Cys349. His327 provides a ligand contact to Zn(2+). Glu328 is a catalytic residue. Residues His331 and His337 each coordinate Zn(2+). Ca(2+) is bound by residues Cys382 and Asn385. The propeptide occupies 388–403 (LRTDTVSTPVSGNELL). The Disintegrin domain occupies 395-476 (TPVSGNELLE…AGCPRNGFYG (82 aa)). 6 disulfides stabilise this stretch: Cys409/Cys424, Cys411/Cys419, Cys418/Cys441, Cys432/Cys438, Cys437/Cys462, and Cys450/Cys469. A Cell attachment site motif is present at residues 454–456 (KGD).

It belongs to the venom metalloproteinase (M12B) family. P-II subfamily. P-IId sub-subfamily. In terms of assembly, homodimer; disulfide-linked (disintegrin). Zn(2+) is required as a cofactor. As to expression, expressed by the venom gland.

The protein resides in the secreted. The metalloproteinase is inhibited by EDTA, o-phenanthroline, and cysteine. Glutathione does not inhibit the enzymatic activity. Its function is as follows. Shows weak degradation of alpha-fibrinogen, but has no activity on beta- and gamma-chains. Digests luteinizing hormone-releasing hormone (LH-RH) and oxidized insulin at X-Leu, X-Phe, and X-Val bonds as well as X-His bond. Does not show fibrinogen-clotting activity. Does not show hemorrhagic activity. Functionally, inhibits ADP-induced platelet aggregation. In Gloydius brevicauda (Korean slamosa snake), this protein is Zinc metalloproteinase/disintegrin.